The chain runs to 262 residues: MQSSSLDPVASERLSHAEKSFTSDLSINEFALLHGAGFEPIELVMGVSVYHVGFQFSGMRQQQELGVLTEATYRARWNAMARMQAEADALKADGIVGVRLNWRHHGEGGEHLEFMAVGTAVRYTAKPGAFRRPNGQAFSSHLSGQDMVTLLRSGFAPVAFVMGNCVFHIAVQGFMQTLRQIGRNMEMPQWTQGNYQARELAMSRMQSEAERDGATGVVGVHFAISNYAWGVHTVEFYTAGTAVRRTGSGETITPSFVLPMDS.

It belongs to the UPF0145 family.

It localises to the encapsulin nanocompartment. Cargo protein of a type 1 encapsulin nanocompartment possibly involved in protection against oxidative stress. This Mycobacterium tuberculosis (strain ATCC 25618 / H37Rv) protein is Encapsulin nanocompartment protein Rv1762c.